The chain runs to 55 residues: Sec-independent protein translocase protein TatA (55 aa).

A helical transmembrane segment spans residues 1-21 (MSLGPWQLFLVLIIILVLFGA).

Belongs to the TatA/E family. The Tat system comprises two distinct complexes: a TatABC complex, containing multiple copies of TatA, TatB and TatC subunits, and a separate TatA complex, containing only TatA subunits. Substrates initially bind to the TatABC complex, which probably triggers association of the separate TatA complex to form the active translocon.

Its subcellular location is the cell membrane. Functionally, part of the twin-arginine translocation (Tat) system that transports large folded proteins containing a characteristic twin-arginine motif in their signal peptide across membranes. TatA could form the protein-conducting channel of the Tat system. The sequence is that of Sec-independent protein translocase protein TatA from Wolbachia pipientis wMel.